We begin with the raw amino-acid sequence, 123 residues long: Large ribosomal subunit protein uL29 (123 aa).

Residues 84–123 are disordered; the sequence is RPKKTRAMRRRLNKHEEGLKTKKQQRKERLYPPRKYAVKA. Residues 86–96 show a composition bias toward basic residues; the sequence is KKTRAMRRRLN.

It belongs to the universal ribosomal protein uL29 family. As to quaternary structure, component of the large ribosomal subunit.

The protein localises to the cytoplasm. Functionally, component of the large ribosomal subunit. The ribosome is a large ribonucleoprotein complex responsible for the synthesis of proteins in the cell. The chain is Large ribosomal subunit protein uL29 (RPL35) from Ophiophagus hannah (King cobra).